The following is a 254-amino-acid chain: Flavin-dependent thymidylate synthase (254 aa).

A ThyX domain is found at 7 to 237 (LRVQLIARTE…PAVFADFEIY (231 aa)). FAD is bound by residues S71, 95–97 (RHR), and Q103. DUMP is bound by residues 92–95 (ELIR), 103–107 (QLSQR), and R176. Residues 95 to 105 (RHRHFSYSQLS) carry the ThyX motif motif. Residues 192-194 (NYR) and H198 contribute to the FAD site. Residue R203 coordinates dUMP. R203 (involved in ionization of N3 of dUMP, leading to its activation) is an active-site residue.

The protein belongs to the thymidylate synthase ThyX family. In terms of assembly, homotetramer. FAD is required as a cofactor.

The enzyme catalyses dUMP + (6R)-5,10-methylene-5,6,7,8-tetrahydrofolate + NADPH + H(+) = dTMP + (6S)-5,6,7,8-tetrahydrofolate + NADP(+). It functions in the pathway pyrimidine metabolism; dTTP biosynthesis. Functionally, catalyzes the reductive methylation of 2'-deoxyuridine-5'-monophosphate (dUMP) to 2'-deoxythymidine-5'-monophosphate (dTMP) while utilizing 5,10-methylenetetrahydrofolate (mTHF) as the methyl donor, and NADPH and FADH(2) as the reductant. This chain is Flavin-dependent thymidylate synthase, found in Mycobacterium sp. (strain KMS).